A 53-amino-acid chain; its full sequence is ATP synthase protein 8 (53 aa).

Residues 4 to 24 form a helical membrane-spanning segment; that stretch reads MAPISWLLLFIIFSITFILFC.

It belongs to the ATPase protein 8 family. As to quaternary structure, F-type ATPases have 2 components, CF(1) - the catalytic core - and CF(0) - the membrane proton channel.

It is found in the mitochondrion membrane. Its function is as follows. Mitochondrial membrane ATP synthase (F(1)F(0) ATP synthase or Complex V) produces ATP from ADP in the presence of a proton gradient across the membrane which is generated by electron transport complexes of the respiratory chain. F-type ATPases consist of two structural domains, F(1) - containing the extramembraneous catalytic core and F(0) - containing the membrane proton channel, linked together by a central stalk and a peripheral stalk. During catalysis, ATP synthesis in the catalytic domain of F(1) is coupled via a rotary mechanism of the central stalk subunits to proton translocation. Part of the complex F(0) domain. Minor subunit located with subunit a in the membrane. The polypeptide is ATP synthase protein 8 (mt:ATPase8) (Drosophila mauritiana (Fruit fly)).